The primary structure comprises 214 residues: Adenylate kinase (214 aa).

10-15 contributes to the ATP binding site; that stretch reads GAGKGT. An NMP region spans residues 30–59; that stretch reads STGDMFREEISAKSELGRKVEDILKRGELV. Residues Thr-31, Arg-36, 57 to 59, 85 to 88, and Gln-92 each bind AMP; these read ELV and GYPR. Residues 126-163 are LID; it reads NRRICKNCGKIYNLITLPPKINGKCDVCGGELYQREDD. An ATP-binding site is contributed by Arg-127. Cys-130 and Cys-133 together coordinate Zn(2+). 136 to 137 lines the ATP pocket; the sequence is IY. Residues Cys-150 and Cys-153 each coordinate Zn(2+). AMP-binding residues include Arg-160 and Arg-171. Met-199 is a binding site for ATP.

This sequence belongs to the adenylate kinase family. As to quaternary structure, monomer.

It is found in the cytoplasm. The catalysed reaction is AMP + ATP = 2 ADP. Its pathway is purine metabolism; AMP biosynthesis via salvage pathway; AMP from ADP: step 1/1. Catalyzes the reversible transfer of the terminal phosphate group between ATP and AMP. Plays an important role in cellular energy homeostasis and in adenine nucleotide metabolism. The chain is Adenylate kinase from Thermosipho melanesiensis (strain DSM 12029 / CIP 104789 / BI429).